A 258-amino-acid chain; its full sequence is E3 ubiquitin-protein ligase RNF170 (258 aa).

Topologically, residues 1-24 (MAKYQGEVQSLKLDDDSVIEGVSD) are lumenal. The chain crosses the membrane as a helical span at residues 25 to 45 (QVLVAVVVSFALIATLVYALF). The Cytoplasmic segment spans residues 46-201 (RNVHQNIHPE…GGLFWMFRIR (156 aa)). The RING-type zinc finger occupies 87–130 (CPICLHQASFPVETNCGHLFCGACIIAYWRYGSWLGAISCPICR). Residues 202-222 (IILCLMGAFFYLISPLDFVPE) form a helical membrane-spanning segment. A topological domain (lumenal) is located at residue Ala-223. A helical membrane pass occupies residues 224–244 (LFGILGFLDDFFVIFLLLIYI). Residues 245-258 (SIMYREVITQRLTR) are Cytoplasmic-facing.

In terms of assembly, (Microbial infection) Interacts with human cytomegalovirus protein NEC2/UL50; this interaction promotes of UBA7 ubiquitination and subsequent proteasomal degradation. Constitutively associated with the ERLIN1/ERLIN 2 complex. Interacts with activated ITPR1. As to expression, expressed in the spinal cord.

The protein localises to the endoplasmic reticulum membrane. It catalyses the reaction S-ubiquitinyl-[E2 ubiquitin-conjugating enzyme]-L-cysteine + [acceptor protein]-L-lysine = [E2 ubiquitin-conjugating enzyme]-L-cysteine + N(6)-ubiquitinyl-[acceptor protein]-L-lysine.. The protein operates within protein modification; protein ubiquitination. E3 ubiquitin-protein ligase that plays an essential role in stimulus-induced inositol 1,4,5-trisphosphate receptor type 1 (ITPR1) ubiquitination and degradation via the endoplasmic reticulum-associated degradation (ERAD) pathway. Also involved in ITPR1 turnover in resting cells. Selectively inhibits the TLR3-triggered innate immune response by promoting the 'Lys-48'-linked polyubiquitination and degradation of TLR3. The protein is E3 ubiquitin-protein ligase RNF170 (RNF170) of Homo sapiens (Human).